The primary structure comprises 293 residues: Bifunctional protein FolD (293 aa).

NADP(+) is bound by residues 164–166 (GRS), S193, and T234.

It belongs to the tetrahydrofolate dehydrogenase/cyclohydrolase family. Homodimer.

The enzyme catalyses (6R)-5,10-methylene-5,6,7,8-tetrahydrofolate + NADP(+) = (6R)-5,10-methenyltetrahydrofolate + NADPH. It catalyses the reaction (6R)-5,10-methenyltetrahydrofolate + H2O = (6R)-10-formyltetrahydrofolate + H(+). Its pathway is one-carbon metabolism; tetrahydrofolate interconversion. Its function is as follows. Catalyzes the oxidation of 5,10-methylenetetrahydrofolate to 5,10-methenyltetrahydrofolate and then the hydrolysis of 5,10-methenyltetrahydrofolate to 10-formyltetrahydrofolate. The sequence is that of Bifunctional protein FolD from Bacteroides fragilis (strain ATCC 25285 / DSM 2151 / CCUG 4856 / JCM 11019 / LMG 10263 / NCTC 9343 / Onslow / VPI 2553 / EN-2).